A 179-amino-acid chain; its full sequence is Large ribosomal subunit protein uL5 (179 aa).

This sequence belongs to the universal ribosomal protein uL5 family. In terms of assembly, part of the 50S ribosomal subunit; part of the 5S rRNA/L5/L18/L25 subcomplex. Contacts the 5S rRNA and the P site tRNA. Forms a bridge to the 30S subunit in the 70S ribosome.

Functionally, this is one of the proteins that bind and probably mediate the attachment of the 5S RNA into the large ribosomal subunit, where it forms part of the central protuberance. In the 70S ribosome it contacts protein S13 of the 30S subunit (bridge B1b), connecting the 2 subunits; this bridge is implicated in subunit movement. Contacts the P site tRNA; the 5S rRNA and some of its associated proteins might help stabilize positioning of ribosome-bound tRNAs. The protein is Large ribosomal subunit protein uL5 of Burkholderia cenocepacia (strain HI2424).